We begin with the raw amino-acid sequence, 107 residues long: Iron-binding protein IscA (107 aa).

Fe cation is bound by residues C35, C99, and C101.

This sequence belongs to the HesB/IscA family. As to quaternary structure, homodimer; may form tetramers and higher multimers. The cofactor is Fe cation.

Functionally, is able to transfer iron-sulfur clusters to apo-ferredoxin. Multiple cycles of [2Fe2S] cluster formation and transfer are observed, suggesting that IscA acts catalytically. Recruits intracellular free iron so as to provide iron for the assembly of transient iron-sulfur cluster in IscU in the presence of IscS, L-cysteine and the thioredoxin reductase system TrxA/TrxB. In Yersinia enterocolitica serotype O:8 / biotype 1B (strain NCTC 13174 / 8081), this protein is Iron-binding protein IscA.